The chain runs to 579 residues: Nif-specific regulatory protein (579 aa).

The region spanning 40 to 187 (DPVAEVPQIF…MVASLLEQAL (148 aa)) is the GAF domain. The Sigma-54 factor interaction domain maps to 226–454 (IVGSSPAIAE…LENCVNRAAA (229 aa)). ATP contacts are provided by residues 254–261 (GESGTGKE) and 317–326 (ADGGTLFLDE). An inter-domain linker region spans residues 464–536 (EELACRQGAC…PLRTKTAQLS (73 aa)). The a divalent metal cation site is built by cysteine 468 and cysteine 473. Positions 502–529 (RVSAPPPEPAPAPEPAPEAPPREEVPLR) are disordered. A run of 7 repeats spans residues 505–506 (AP), 507–508 (PP), 509–510 (EP), 511–512 (AP), 513–514 (AP), 515–516 (EP), and 517–518 (AP). The 7 X 2 AA tandem repeats of X-P stretch occupies residues 505–518 (APPPEPAPAPEPAP). The segment covering 505 to 520 (APPPEPAPAPEPAPEA) has biased composition (pro residues). A C-terminal DNA-binding domain region spans residues 537-579 (REELLRALESAGWVQAKAARLLGMTPRQIAYALQKFEIELRKI). A DNA-binding region (H-T-H motif) is located at residues 551–570 (QAKAARLLGMTPRQIAYALQ).

Interacts with sigma-54.

Its function is as follows. Required for activation of most nif operons, which are directly involved in nitrogen fixation. The chain is Nif-specific regulatory protein (nifA1) from Rhodobacter capsulatus (strain ATCC BAA-309 / NBRC 16581 / SB1003).